Reading from the N-terminus, the 611-residue chain is Actin-binding LIM protein 2 (611 aa).

LIM zinc-binding domains lie at 22–81 (ILCN…LYGT), 81–141 (TRCF…VSVG), 151–210 (RSCG…KFGI), and 210–270 (IRCD…ARTE). Zn(2+)-binding residues include cysteine 83, cysteine 86, histidine 103, cysteine 106, cysteine 109, cysteine 112, cysteine 131, and cysteine 134. Positions 212, 215, 232, 235, 238, 241, 260, and 263 each coordinate Zn(2+). The span at 269-278 (TEDRNKETRT) shows a compositional bias: basic and acidic residues. Disordered stretches follow at residues 269 to 295 (TEDR…SGSP) and 336 to 527 (YISH…DQRN). Low complexity-rich tracts occupy residues 279–295 (SSES…SGSP) and 363–372 (SSPSSTGSVS). Residues serine 282, serine 294, serine 364, and serine 367 each carry the phosphoserine modification. Over residues 393–404 (SGRSTPSLSVLS) the composition is skewed to polar residues. Serine 452 is modified (phosphoserine). The residue at position 472 (threonine 472) is a Phosphothreonine. Residues 473–488 (RTNSPDLDTQSLSHSS) are compositionally biased toward polar residues. Serine 476 and serine 578 each carry phosphoserine. The HP domain occupies 543–611 (MREYKIYPYD…NDLKKKALLF (69 aa)).

As to quaternary structure, interacts with F-actin and ABRA. Highly expressed in skeletal muscle.

Its subcellular location is the cytoplasm. In terms of biological role, may act as scaffold protein. May stimulate ABRA activity and ABRA-dependent SRF transcriptional activity. This Homo sapiens (Human) protein is Actin-binding LIM protein 2 (ABLIM2).